Reading from the N-terminus, the 751-residue chain is Trehalose phosphorylase (751 aa).

The propeptide occupies 1-26 (MSTPHHQFESKSSTAIRRRLSSSVSS). The tract at residues 1 to 28 (MSTPHHQFESKSSTAIRRRLSSSVSSKQ) is disordered.

The protein belongs to the glycosyltransferase group 1 family. Glycosyltransferase 4 subfamily. Homodimer. In terms of tissue distribution, expressed in mycelia, stipes and pilei.

The catalysed reaction is alpha,alpha-trehalose + phosphate = alpha-D-glucose + alpha-D-glucose 1-phosphate. Functionally, reversibly catalyzes the synthesis and degradation of trehalose from glucose and alpha-D-glucose 1-phosphate. The equilibrium lies in the direction of trehalose synthesis. The polypeptide is Trehalose phosphorylase (Pleurotus sajor-caju (Oyster mushroom)).